A 504-amino-acid chain; its full sequence is Maturase K (504 aa).

This sequence belongs to the intron maturase 2 family. MatK subfamily.

Its subcellular location is the plastid. It is found in the chloroplast. Usually encoded in the trnK tRNA gene intron. Probably assists in splicing its own and other chloroplast group II introns. This chain is Maturase K, found in Carpinus betulus (European hornbeam).